Consider the following 197-residue polypeptide: Heart- and neural crest derivatives-expressed protein 1 (197 aa).

Disordered stretches follow at residues 61–94 (VVGP…RRTE) and 155–184 (VDGK…KGRT). Positions 78–90 (LGRRKGAPPKKER) are enriched in basic residues. The bHLH domain maps to 80 to 132 (RRKGAPPKKERRRTESINSAFAELRECIPNVPADTKLSKIKTLRLATSYIGYL).

Efficient DNA binding requires dimerization with another bHLH protein. Highly expressed in the adult heart and expressed at lower levels in the intestine and gall bladder.

It is found in the nucleus. The protein resides in the nucleolus. In terms of biological role, plays an essential role in cardiac morphogenesis. The polypeptide is Heart- and neural crest derivatives-expressed protein 1 (hand1) (Xenopus laevis (African clawed frog)).